The chain runs to 398 residues: Succinate--CoA ligase [ADP-forming] subunit beta (398 aa).

In terms of domain architecture, ATP-grasp spans 9-254; that stretch reads KAVLREFGVP…ETEEDAKEIE (246 aa). ATP-binding positions include K46, 53 to 55, E109, S112, and E117; that span reads GRG. Mg(2+) is bound by residues N209 and D223. Substrate contacts are provided by residues N274 and 331–333; that span reads GIM.

Belongs to the succinate/malate CoA ligase beta subunit family. As to quaternary structure, heterotetramer of two alpha and two beta subunits. Requires Mg(2+) as cofactor.

It carries out the reaction succinate + ATP + CoA = succinyl-CoA + ADP + phosphate. The enzyme catalyses GTP + succinate + CoA = succinyl-CoA + GDP + phosphate. It participates in carbohydrate metabolism; tricarboxylic acid cycle; succinate from succinyl-CoA (ligase route): step 1/1. In terms of biological role, succinyl-CoA synthetase functions in the citric acid cycle (TCA), coupling the hydrolysis of succinyl-CoA to the synthesis of either ATP or GTP and thus represents the only step of substrate-level phosphorylation in the TCA. The beta subunit provides nucleotide specificity of the enzyme and binds the substrate succinate, while the binding sites for coenzyme A and phosphate are found in the alpha subunit. The protein is Succinate--CoA ligase [ADP-forming] subunit beta of Rhodopseudomonas palustris (strain ATCC BAA-98 / CGA009).